Consider the following 344-residue polypeptide: Geranylgeranyl pyrophosphate synthase 10, mitochondrial (344 aa).

Residues 1-40 (MENREVFVYIVISIFRSLQFLFWRFRPRYNDVTSALTRPL) constitute a mitochondrion transit peptide. Isopentenyl diphosphate-binding residues include lysine 91, arginine 94, and histidine 123. Aspartate 130 and aspartate 136 together coordinate Mg(2+). Residue arginine 141 coordinates dimethylallyl diphosphate. Arginine 142 lines the isopentenyl diphosphate pocket. Lysine 229, threonine 230, glutamine 267, lysine 284, and lysine 294 together coordinate dimethylallyl diphosphate.

The protein belongs to the FPP/GGPP synthase family. Monomer. It depends on Mg(2+) as a cofactor.

The protein resides in the mitochondrion. The catalysed reaction is isopentenyl diphosphate + dimethylallyl diphosphate = (2E)-geranyl diphosphate + diphosphate. The enzyme catalyses isopentenyl diphosphate + (2E)-geranyl diphosphate = (2E,6E)-farnesyl diphosphate + diphosphate. It carries out the reaction isopentenyl diphosphate + (2E,6E)-farnesyl diphosphate = (2E,6E,10E)-geranylgeranyl diphosphate + diphosphate. Its pathway is isoprenoid biosynthesis; farnesyl diphosphate biosynthesis; farnesyl diphosphate from geranyl diphosphate and isopentenyl diphosphate: step 1/1. It functions in the pathway isoprenoid biosynthesis; geranyl diphosphate biosynthesis; geranyl diphosphate from dimethylallyl diphosphate and isopentenyl diphosphate: step 1/1. The protein operates within isoprenoid biosynthesis; geranylgeranyl diphosphate biosynthesis; geranylgeranyl diphosphate from farnesyl diphosphate and isopentenyl diphosphate: step 1/1. Functionally, catalyzes the trans-addition of the three molecules of IPP onto DMAPP to form geranylgeranyl pyrophosphate. This Arabidopsis thaliana (Mouse-ear cress) protein is Geranylgeranyl pyrophosphate synthase 10, mitochondrial.